A 473-amino-acid chain; its full sequence is Ribulose bisphosphate carboxylase large chain 2 (473 aa).

Asparagine 116 and threonine 166 together coordinate substrate. Lysine 168 serves as the catalytic Proton acceptor. Lysine 170 contacts substrate. Residues lysine 194, aspartate 196, and glutamate 197 each contribute to the Mg(2+) site. At lysine 194 the chain carries N6-carboxylysine. The Proton acceptor role is filled by histidine 287. Substrate contacts are provided by arginine 288, histidine 320, and serine 372.

It belongs to the RuBisCO large chain family. Type I subfamily. As to quaternary structure, heterohexadecamer of 8 large chains and 8 small chains. Mg(2+) is required as a cofactor.

The enzyme catalyses 2 (2R)-3-phosphoglycerate + 2 H(+) = D-ribulose 1,5-bisphosphate + CO2 + H2O. It carries out the reaction D-ribulose 1,5-bisphosphate + O2 = 2-phosphoglycolate + (2R)-3-phosphoglycerate + 2 H(+). Its function is as follows. RuBisCO catalyzes two reactions: the carboxylation of D-ribulose 1,5-bisphosphate, the primary event in carbon dioxide fixation, as well as the oxidative fragmentation of the pentose substrate. Both reactions occur simultaneously and in competition at the same active site. The protein is Ribulose bisphosphate carboxylase large chain 2 of Acidithiobacillus ferrooxidans (strain ATCC 23270 / DSM 14882 / CIP 104768 / NCIMB 8455) (Ferrobacillus ferrooxidans (strain ATCC 23270)).